The chain runs to 190 residues: Pyridoxal 5'-phosphate synthase subunit PdxT (190 aa).

Glycine 46 to serine 48 is an L-glutamine binding site. Cysteine 78 functions as the Nucleophile in the catalytic mechanism. Residues arginine 108 and isoleucine 137–arginine 138 each bind L-glutamine. Residues histidine 174 and glutamate 176 each act as charge relay system in the active site.

The protein belongs to the glutaminase PdxT/SNO family. As to quaternary structure, in the presence of PdxS, forms a dodecamer of heterodimers. Only shows activity in the heterodimer.

The catalysed reaction is aldehydo-D-ribose 5-phosphate + D-glyceraldehyde 3-phosphate + L-glutamine = pyridoxal 5'-phosphate + L-glutamate + phosphate + 3 H2O + H(+). It catalyses the reaction L-glutamine + H2O = L-glutamate + NH4(+). It participates in cofactor biosynthesis; pyridoxal 5'-phosphate biosynthesis. Its function is as follows. Catalyzes the hydrolysis of glutamine to glutamate and ammonia as part of the biosynthesis of pyridoxal 5'-phosphate. The resulting ammonia molecule is channeled to the active site of PdxS. This Herpetosiphon aurantiacus (strain ATCC 23779 / DSM 785 / 114-95) protein is Pyridoxal 5'-phosphate synthase subunit PdxT.